The sequence spans 352 residues: Nicotinate-nucleotide--dimethylbenzimidazole phosphoribosyltransferase (352 aa).

The active-site Proton acceptor is the Glu318.

Belongs to the CobT family.

The enzyme catalyses 5,6-dimethylbenzimidazole + nicotinate beta-D-ribonucleotide = alpha-ribazole 5'-phosphate + nicotinate + H(+). It participates in nucleoside biosynthesis; alpha-ribazole biosynthesis; alpha-ribazole from 5,6-dimethylbenzimidazole: step 1/2. Its function is as follows. Catalyzes the synthesis of alpha-ribazole-5'-phosphate from nicotinate mononucleotide (NAMN) and 5,6-dimethylbenzimidazole (DMB). The protein is Nicotinate-nucleotide--dimethylbenzimidazole phosphoribosyltransferase of Geobacter sulfurreducens (strain ATCC 51573 / DSM 12127 / PCA).